A 483-amino-acid chain; its full sequence is Acyl-coenzyme A thioesterase 2, mitochondrial (483 aa).

Lys-104 bears the N6-acetyllysine mark. Catalysis depends on charge relay system residues Ser-294, Asp-388, and His-422. An N6-succinyllysine modification is found at Lys-470. Positions 481 to 483 (SKV) match the Microbody targeting signal motif.

It belongs to the C/M/P thioester hydrolase family. Monomer. In terms of tissue distribution, strongest expression in heart, liver, muscle and kidney. Weak in placenta and pancreas.

It is found in the mitochondrion. The enzyme catalyses hexadecanoyl-CoA + H2O = hexadecanoate + CoA + H(+). The catalysed reaction is tetradecanoyl-CoA + H2O = tetradecanoate + CoA + H(+). It catalyses the reaction octadecanoyl-CoA + H2O = octadecanoate + CoA + H(+). It carries out the reaction eicosanoyl-CoA + H2O = eicosanoate + CoA + H(+). The enzyme catalyses decanoyl-CoA + H2O = decanoate + CoA + H(+). The catalysed reaction is dodecanoyl-CoA + H2O = dodecanoate + CoA + H(+). It catalyses the reaction (9Z)-octadecenoyl-CoA + H2O = (9Z)-octadecenoate + CoA + H(+). It carries out the reaction (9Z)-hexadecenoyl-CoA + H2O = (9Z)-hexadecenoate + CoA + H(+). The enzyme catalyses (9E)-octadecenoyl-CoA + H2O = (9E)-octadecenoate + CoA + H(+). The catalysed reaction is (9Z,12Z)-octadecadienoyl-CoA + H2O = (9Z,12Z)-octadecadienoate + CoA + H(+). The protein operates within lipid metabolism; fatty acid metabolism. In terms of biological role, catalyzes the hydrolysis of acyl-CoAs into free fatty acids and coenzyme A (CoASH), regulating their respective intracellular levels. Displays higher activity toward long chain acyl CoAs (C14-C20). The enzyme is involved in enhancing the hepatic fatty acid oxidation in mitochondria. The chain is Acyl-coenzyme A thioesterase 2, mitochondrial (ACOT2) from Homo sapiens (Human).